We begin with the raw amino-acid sequence, 1137 residues long: DNA mismatch repair protein Msh3 (1137 aa).

Composition is skewed to low complexity over residues 31–42 (TGSLKSTSSSTG) and 51–62 (AAAAAAAAAAAA). Disordered stretches follow at residues 31-122 (TGSL…SEPK) and 201-222 (SQFG…KSAN). Phosphoserine is present on Ser33. Residues 63–76 (PPAPPAPAFPPQLP) show a composition bias toward pro residues. An interaction with EXO1 region spans residues 75-297 (LPPHIATEID…HRLFVHVRRL (223 aa)). Residues 81–97 (TEIDRRKKRPLENDGPV) are compositionally biased toward basic and acidic residues. Residues 201–220 (SQFGSSNTSHENLQKTASKS) show a composition bias toward polar residues. 896 to 903 (GPNMGGKS) contributes to the ATP binding site. A Phosphothreonine modification is found at Thr1099.

Belongs to the DNA mismatch repair MutS family. MSH3 subfamily. In terms of assembly, component of the DNA mismatch repair (MMR) complex composed at least of MSH2, MSH3, MSH6, PMS1 and MLH1. Heterodimer consisting of MSH2-MSH3 (MutS beta). Forms a ternary complex with MutL alpha (MLH1-PMS1). Interacts with EXO1. Interacts with MCM9.

Component of the post-replicative DNA mismatch repair system (MMR). Heterodimerizes with MSH2 to form MutS beta which binds to DNA mismatches thereby initiating DNA repair. When bound, the MutS beta heterodimer bends the DNA helix and shields approximately 20 base pairs. MutS beta recognizes large insertion-deletion loops (IDL) up to 13 nucleotides long. After mismatch binding, forms a ternary complex with the MutL alpha heterodimer, which is thought to be responsible for directing the downstream MMR events, including strand discrimination, excision, and resynthesis. This chain is DNA mismatch repair protein Msh3 (MSH3), found in Homo sapiens (Human).